A 342-amino-acid polypeptide reads, in one-letter code: MDEANQIAKDSVPRIDAYGFIRPVEFDYAVYEEFIARYRVVLTRRALKWSKLLQQSAAVEKSIKVKRYIRKGIPNEHRSHVWMVVSGAQAQMGMNTGYFRRMFIEGEKNPKLLDLVNTDLNRTFPDNVQFRKNSNPSLQKHLYNVLVAYGQHNTTVGYCQGMNFIAGYLILVTKDEEKAFWLMDALIGRILPDYYSPAMTGLKTDQEVLGDLVKKKLPAVSQLIEAHGVMWTLLVSRWFICLFIDILPVETVLRIWDCLFFEGSKVLFRVALTLIKQYQAFILEARNFPDICDKFKEITKGEFVTDCHYFMQKIFAEPGSLSKTTIDKLREKQRLQLASEEK.

The Rab-GAP TBC domain maps to 72-263 (GIPNEHRSHV…RIWDCLFFEG (192 aa)).

Functionally, may act as a GTPase-activating protein for Rab family protein(s). This Xenopus laevis (African clawed frog) protein is Growth hormone-regulated TBC protein 1 (grtp1).